A 750-amino-acid chain; its full sequence is MDGGGSSSWTHVSKNLIERRAVKGCLLPTPSDVMDAAVMALKDVTENIVGQQLFSVDRTNALSVIHTNEVPESIIATAIARDTSRDYLREYEGAAKCNLAATDLSHDEMWEVVIKRYWRYLRESSGAEVVDRGAVGQATQSVLSVLLLQSTFGKKRLSKNPFKHKGPNVGYKSNLEDLRSAFTKIEKYMYYMRPNDPMTKSEDTELRLHELLAYVTTCYRWLLWFMDLTDAKVLRNIDKGPVITHGPRESRPPDELVRRHLKSGPAISAGTGVALTLSTATADALIVLLRMSVSWTSHSWKSNTHGVTGAIVAAVELVTLIHHHLQYIINTVFAGYVCWLDGGVENSYLNSALRSQGRFDHFVGKLVPIMATLSWANMEKGTVMWFKYALAKSIVCHGSPTQHYLTVLESIASKRTGACPPQGSTFGRNPSGFPGQFCCPPQGPLPAPPNSKTRGTFRRCRPGSLRSSRQLPTSPPSNIVSPRTNPAIEGSTAAKNVQGAETIQVRSSGEFNDCIWYINGAYPHQRSDSSSSDNSTCSSTETQYITLPSTPSPTGDVVYTNPLLGPDEEVDASPQPVDPMSDYSAPKNPDYMRPRSTLVEEVWQLRDSDYTPYMRPSRPSRAGRSRVRVEDQTLEPSSPAGCNPPANSPENDSDDAAVDSPPISPEVVYGTFRPRAKCVYDQYGLTALAALSASRAKARRTRPGPTQPDVCRERDEESAEPRHDGFIRRTMSTTGPPRKHPDQTERVSSL.

Disordered regions lie at residues 437–484, 525–593, 610–669, and 692–750; these read FCCP…SPRT, QRSD…DYMR, YTPY…EVVY, and SASR…VSSL. Over residues 465–484 the composition is skewed to polar residues; sequence LRSSRQLPTSPPSNIVSPRT. Positions 528 to 540 are enriched in low complexity; sequence DSSSSDNSTCSST. Polar residues predominate over residues 541 to 553; that stretch reads ETQYITLPSTPSP. 2 stretches are compositionally biased toward basic and acidic residues: residues 710–727 and 739–750; these read VCRE…DGFI and KHPDQTERVSSL.

Belongs to the herpesviridae HHV-1 VP11/12 protein family.

It localises to the virion tegument. Its subcellular location is the host cell membrane. Modulates alpha trans-inducing factor-dependent activation of alpha genes. This is Tegument protein UL46 homolog from Equine herpesvirus 1 (strain V592) (EHV-1).